The chain runs to 199 residues: MNCVCRLVLVVLSLWPDTAVAPGPPPGSPRASPDPRAELDSTVLLTRSLLEDTRQLTIQLKDKFPADGDHNLDSLPTLAMSAGALGALQLPSVLTRLRADLLSYLRHVQWLRRAMGSSLKTLEPELGTLQTRLDRLLRRLQLLMSRLALPQLPPDPPAPPLAPPSSTWGGIRAAHAILGGLHLTLDWAVRGLLLLKTRL.

Residues methionine 1–alanine 21 form the signal peptide. Residues histidine 182–arginine 190 are important for interaction with IL11RA and for the stimulation of cell proliferation.

The protein belongs to the IL-6 superfamily. As to quaternary structure, interacts with IL11RA to associate with IL6ST, giving rise to a multimeric signaling complex.

The protein localises to the secreted. Cytokine that stimulates the proliferation of hematopoietic stem cells and megakaryocyte progenitor cells and induces megakaryocyte maturation resulting in increased platelet production. Also promotes the proliferation of hepatocytes in response to liver damage. Binding to its receptor formed by IL6ST and IL11RA activates a signaling cascade that promotes cell proliferation. Signaling leads to the activation of intracellular protein kinases and the phosphorylation of STAT3. The interaction with the membrane-bound IL11RA and IL6ST stimulates 'classic signaling', whereas the binding of IL11 and soluble IL11RA to IL6ST stimulates 'trans-signaling'. This chain is Interleukin-11 (IL11), found in Macaca fascicularis (Crab-eating macaque).